The sequence spans 115 residues: U3-lycotoxin-Ls1k (115 aa).

Residues 1-20 form the signal peptide; the sequence is MKFVLLFGVLLVALFSYSSA. Residues 21 to 44 constitute a propeptide that is removed on maturation; that stretch reads EMLDDFGQADEDELLSLIEKEEAR. 4 disulfide bridges follow: Cys48–Cys63, Cys55–Cys72, Cys62–Cys87, and Cys74–Cys85.

The protein belongs to the neurotoxin 19 (CSTX) family. 01 subfamily. As to expression, expressed by the venom gland.

The protein localises to the secreted. The polypeptide is U3-lycotoxin-Ls1k (Lycosa singoriensis (Wolf spider)).